Consider the following 198-residue polypeptide: MEFYPVAIEKLIEEFAKLPSIGKKTAQRLTLHILNLPDDEVREFAKALVKAKGTIKYCSTCGNFTDTDPCALCSNPNRDKSTICVVEQPKDIMTMEKVKEFNGLYHVLHGNISPMQGRGPQDIKIRELVARMNEEVKEVILATNPNIEGEATAMYIAKVLKPLDVKVTRIAAGIPVGGDLEYADEVTLSKALEGRKEI.

The C4-type zinc finger occupies 58 to 73; that stretch reads CSTCGNFTDTDPCALC. Residues 81 to 175 enclose the Toprim domain; the sequence is STICVVEQPK…KVTRIAAGIP (95 aa).

It belongs to the RecR family.

In terms of biological role, may play a role in DNA repair. It seems to be involved in an RecBC-independent recombinational process of DNA repair. It may act with RecF and RecO. The chain is Recombination protein RecR from Clostridium botulinum (strain Alaska E43 / Type E3).